Consider the following 141-residue polypeptide: Nucleoside diphosphate kinase (141 aa).

Residues lysine 11, phenylalanine 59, arginine 87, threonine 93, arginine 104, and asparagine 114 each coordinate ATP. The active-site Pros-phosphohistidine intermediate is histidine 117.

The protein belongs to the NDK family. As to quaternary structure, homotetramer. Mg(2+) serves as cofactor.

The protein localises to the cytoplasm. It carries out the reaction a 2'-deoxyribonucleoside 5'-diphosphate + ATP = a 2'-deoxyribonucleoside 5'-triphosphate + ADP. The catalysed reaction is a ribonucleoside 5'-diphosphate + ATP = a ribonucleoside 5'-triphosphate + ADP. Its function is as follows. Major role in the synthesis of nucleoside triphosphates other than ATP. The ATP gamma phosphate is transferred to the NDP beta phosphate via a ping-pong mechanism, using a phosphorylated active-site intermediate. The polypeptide is Nucleoside diphosphate kinase (Pseudomonas syringae pv. tomato (strain ATCC BAA-871 / DC3000)).